A 1846-amino-acid polypeptide reads, in one-letter code: Peripheral-type benzodiazepine receptor-associated protein 1 (1846 aa).

3 disordered regions span residues 57 to 97, 281 to 318, and 560 to 628; these read EESS…GYSC, NQRE…DDVE, and GPKD…SEVE. A compositionally biased stretch (polar residues) spans 576-587; that stretch reads PKSSEPALTTLT. The segment covering 599–612 has biased composition (low complexity); the sequence is SLSNSSRSESIHNS. The 68-residue stretch at 649-716 folds into the SH3 1 domain; the sequence is ARIQVFLARY…PSNFVERVSD (68 aa). Positions 726 to 785 are disordered; it reads ELADSSHSSGPELSFLSGGGGGCSSGGQSSGGRSQPRPEEEAAGDELSLSPPPEGLGEPL. Residues 742 to 755 show a composition bias toward gly residues; the sequence is SGGGGGCSSGGQSS. Fibronectin type-III domains lie at 787–878, 880–972, and 977–1075; these read VPYP…AGAG, VPSQ…TLPA, and APLD…PALA. 7 disordered regions span residues 1084–1107, 1163–1219, 1243–1302, 1322–1476, 1492–1617, 1704–1755, and 1812–1846; these read SCLS…GLGD, EPTL…LDSG, HSRN…SDEE, SIPE…PESS, YDSE…QDLP, LTEA…AAQK, and VPSN…RVQC. Over residues 1202 to 1219 the composition is skewed to basic and acidic residues; the sequence is TQKKPSIEACHGGDLDSG. A compositionally biased stretch (acidic residues) spans 1251–1265; it reads DIQEEEEEEEEEEEE. Over residues 1270-1283 the composition is skewed to polar residues; that stretch reads PCSSQKQVAGNSIR. Residues 1324–1335 show a composition bias toward acidic residues; sequence PEEEEEEEEEEG. Composition is skewed to basic and acidic residues over residues 1411–1420 and 1545–1577; these read RPQDPREHCS and AWEK…ESRG. The SH3 2 domain occupies 1616 to 1684; the sequence is LPVRVFVALF…PCNMVAEVAV (69 aa). Polar residues predominate over residues 1705-1719; that stretch reads TEASGNGPSVYSSAH. One can recognise an SH3 3 domain in the interval 1755–1822; it reads KTSRPMVAAF…PSNFLEGPGP (68 aa). The span at 1817-1830 shows a compositional bias: low complexity; sequence LEGPGPESGSLESG.

Belongs to the RIMBP family. In terms of assembly, interacts with RIMS1 and RIMS2. Interacts with TSPO. Interacts with CACNA1A. As to expression, predominantly expressed in the brain.

It is found in the cytoplasm. The protein resides in the mitochondrion. In terms of biological role, required for synaptic transmission regulation. It probably controls the recruitement of voltage-gated calcium channels to the presynaptic membrane, and modulates neurotransmitter release. The protein is Peripheral-type benzodiazepine receptor-associated protein 1 of Mus musculus (Mouse).